A 505-amino-acid chain; its full sequence is Outer capsid protein VP5 (505 aa).

Residues M1–E42 form an involved in membrane permeabilization region.

This sequence belongs to the orbivirus VP5 family.

It localises to the virion. VP5 protein is one of the two proteins (with VP2) which constitute the virus particle outer capsid. Acts as a membrane permeabilization protein that mediates release of viral particles from endosomal compartments into the cytoplasm. Permeabilization activity is probably negatively regulated by VP2 and is triggered by endosomal degradation of VP2 and exposure to low pH. In African horse sickness virus 9 (AHSV-9), this protein is Outer capsid protein VP5 (Segment-6).